We begin with the raw amino-acid sequence, 397 residues long: Elongation factor Tu (397 aa).

Residues 10–206 form the tr-type G domain; it reads KPHVNIGTIG…HIDTYIPEPT (197 aa). A G1 region spans residues 19–26; that stretch reads GHVDHGKT. 19-26 contributes to the GTP binding site; the sequence is GHVDHGKT. Threonine 26 serves as a coordination point for Mg(2+). The G2 stretch occupies residues 61–65; that stretch reads GITIS. Residues 82-85 form a G3 region; it reads DCPG. GTP is bound by residues 82 to 86 and 137 to 140; these read DCPGH and NKCD. A G4 region spans residues 137–140; the sequence is NKCD. Residues 175–177 form a G5 region; that stretch reads SAL.

The protein belongs to the TRAFAC class translation factor GTPase superfamily. Classic translation factor GTPase family. EF-Tu/EF-1A subfamily. Monomer.

It localises to the cytoplasm. The enzyme catalyses GTP + H2O = GDP + phosphate + H(+). GTP hydrolase that promotes the GTP-dependent binding of aminoacyl-tRNA to the A-site of ribosomes during protein biosynthesis. This Alkaliphilus oremlandii (strain OhILAs) (Clostridium oremlandii (strain OhILAs)) protein is Elongation factor Tu.